The sequence spans 843 residues: Taste receptor type 1 member 2 (843 aa).

The signal sequence occupies residues 1-19; that stretch reads MGPQARTLHLLFLLLHALP. Topologically, residues 20-570 are extracellular; it reads KPVMLVGNSD…AFLEWHEVPT (551 aa). 9 N-linked (GlcNAc...) asparagine glycosylation sites follow: Asn-87, Asn-296, Asn-316, Asn-355, Asn-372, Asn-432, Asn-484, Asn-491, and Asn-531. A helical membrane pass occupies residues 571–591; the sequence is IVVTILAALGFISTLAILLIF. Topologically, residues 592-606 are cytoplasmic; the sequence is WRHFQTPMVRSAGGP. A helical transmembrane segment spans residues 607–627; the sequence is MCFLMLVPLLLAFGMVPVYVG. At 628-642 the chain is on the extracellular side; that stretch reads PPTVFSCFCRQAFFT. Residues 643–663 form a helical membrane-spanning segment; the sequence is VCFSVCLSCITVRSFQIVCVF. Over 664–682 the chain is Cytoplasmic; it reads KMARRLPSAYGFWMRYHGP. A helical transmembrane segment spans residues 683 to 703; that stretch reads YVFVAFITAVKVALVAGNMLA. Over 704–731 the chain is Extracellular; the sequence is TTINPIGRTDPDDPNIIILSCHPNYRNG. A helical transmembrane segment spans residues 732–752; that stretch reads LLFNTSMDLLLSVLGFSFAYV. The Cytoplasmic segment spans residues 753–764; that stretch reads GKELPTNYNEAK. A helical membrane pass occupies residues 765-785; sequence FITLSMTFSFTSSISLCTFMS. Residues 786-789 lie on the Extracellular side of the membrane; that stretch reads VHDG. A helical transmembrane segment spans residues 790-810; it reads VLVTIMDLLVTVLNFLAIGLG. Topologically, residues 811–843 are cytoplasmic; the sequence is YFGPKCYMILFYPERNTSAYFNSMIQGYTMRKS.

The protein belongs to the G-protein coupled receptor 3 family. TAS1R subfamily. In terms of assembly, forms heterodimers with TAS1R3. As to expression, expressed mainly in circumvallate and foliate taste papillae.

It is found in the cell membrane. Its function is as follows. Putative taste receptor. TAS1R2/TAS1R3 recognizes diverse natural and synthetic sweeteners. The polypeptide is Taste receptor type 1 member 2 (Tas1r2) (Mus musculus (Mouse)).